Consider the following 306-residue polypeptide: Stimulator of interferon genes protein 5 (306 aa).

The interval 1 to 50 (MMSNDSQSEKRTAKWTGSGTPIAEGEESSSPSAHQTRQKATAADDDDDQQ) is disordered. 3 residues coordinate 2',3'-cGAMP: tyrosine 119, arginine 180, and arginine 186.

It belongs to the STING family.

Functionally, facilitator of innate immune signaling that acts as a sensor of second messenger signals produced by cyclic GMP-AMP synthase-like receptors (cGLRs) and promotes the production of type I interferon. Innate immune response is triggered in response to nucleotides from viruses and bacteria delivered to the cytoplasm. Acts by binding cyclic dinucleotides: recognizes and binds 2'-3' linked cGAMP (2'-3'-cGAMP), a second messengers produced by cGLRs in response to nucleotides in the cytosol, such as double-stranded RNA (dsRNA). Upon binding to 2'-3'-cGAMP, oligomerizes and promotes the recruitment and subsequent activation of the transcription factor IRF3 to induce expression of type I interferon. The sequence is that of Stimulator of interferon genes protein 5 from Stylophora pistillata (Smooth cauliflower coral).